A 657-amino-acid polypeptide reads, in one-letter code: Threonine--tRNA ligase (657 aa).

The region spanning 7–70 (DRQQVIITLP…TENARVSIIT (64 aa)) is the TGS domain. The catalytic stretch occupies residues 253 to 555 (DHRKLGAELG…LIEHTAGNFP (303 aa)). C351, H402, and H532 together coordinate Zn(2+).

This sequence belongs to the class-II aminoacyl-tRNA synthetase family. In terms of assembly, homodimer. It depends on Zn(2+) as a cofactor.

It is found in the cytoplasm. The enzyme catalyses tRNA(Thr) + L-threonine + ATP = L-threonyl-tRNA(Thr) + AMP + diphosphate + H(+). Functionally, catalyzes the attachment of threonine to tRNA(Thr) in a two-step reaction: L-threonine is first activated by ATP to form Thr-AMP and then transferred to the acceptor end of tRNA(Thr). Also edits incorrectly charged L-seryl-tRNA(Thr). The sequence is that of Threonine--tRNA ligase from Chlorobaculum tepidum (strain ATCC 49652 / DSM 12025 / NBRC 103806 / TLS) (Chlorobium tepidum).